Consider the following 305-residue polypeptide: Large ribosomal subunit protein uL10 (305 aa).

It belongs to the universal ribosomal protein uL10 family. In terms of assembly, P0 forms a pentameric complex by interaction with dimers of P1 and P2. In terms of processing, phosphorylated.

In terms of biological role, ribosomal protein P0 is the functional equivalent of E.coli protein L10. This is Large ribosomal subunit protein uL10 (rplp0) from Dictyostelium discoideum (Social amoeba).